The primary structure comprises 356 residues: UDP-3-O-acylglucosamine N-acyltransferase (356 aa).

Histidine 242 acts as the Proton acceptor in catalysis.

Belongs to the transferase hexapeptide repeat family. LpxD subfamily. As to quaternary structure, homotrimer.

It carries out the reaction a UDP-3-O-[(3R)-3-hydroxyacyl]-alpha-D-glucosamine + a (3R)-hydroxyacyl-[ACP] = a UDP-2-N,3-O-bis[(3R)-3-hydroxyacyl]-alpha-D-glucosamine + holo-[ACP] + H(+). The protein operates within bacterial outer membrane biogenesis; LPS lipid A biosynthesis. Functionally, catalyzes the N-acylation of UDP-3-O-acylglucosamine using 3-hydroxyacyl-ACP as the acyl donor. Is involved in the biosynthesis of lipid A, a phosphorylated glycolipid that anchors the lipopolysaccharide to the outer membrane of the cell. This is UDP-3-O-acylglucosamine N-acyltransferase from Acinetobacter baumannii (strain AB307-0294).